The chain runs to 382 residues: Succinyl-diaminopimelate desuccinylase (382 aa).

Histidine 71 serves as a coordination point for Zn(2+). Aspartate 73 is a catalytic residue. Aspartate 105 provides a ligand contact to Zn(2+). The Proton acceptor role is filled by glutamate 139. The Zn(2+) site is built by glutamate 140, glutamate 168, and histidine 354.

Belongs to the peptidase M20A family. DapE subfamily. In terms of assembly, homodimer. The cofactor is Zn(2+). Requires Co(2+) as cofactor.

The catalysed reaction is N-succinyl-(2S,6S)-2,6-diaminopimelate + H2O = (2S,6S)-2,6-diaminopimelate + succinate. It functions in the pathway amino-acid biosynthesis; L-lysine biosynthesis via DAP pathway; LL-2,6-diaminopimelate from (S)-tetrahydrodipicolinate (succinylase route): step 3/3. In terms of biological role, catalyzes the hydrolysis of N-succinyl-L,L-diaminopimelic acid (SDAP), forming succinate and LL-2,6-diaminopimelate (DAP), an intermediate involved in the bacterial biosynthesis of lysine and meso-diaminopimelic acid, an essential component of bacterial cell walls. The polypeptide is Succinyl-diaminopimelate desuccinylase (Stutzerimonas stutzeri (strain A1501) (Pseudomonas stutzeri)).